We begin with the raw amino-acid sequence, 158 residues long: Protein-export protein SecB (158 aa).

It belongs to the SecB family. Homotetramer, a dimer of dimers. One homotetramer interacts with 1 SecA dimer.

Its subcellular location is the cytoplasm. One of the proteins required for the normal export of preproteins out of the cell cytoplasm. It is a molecular chaperone that binds to a subset of precursor proteins, maintaining them in a translocation-competent state. It also specifically binds to its receptor SecA. This Rhodopseudomonas palustris (strain BisB5) protein is Protein-export protein SecB.